A 139-amino-acid chain; its full sequence is Plasmid stability protein StbB (139 aa).

In terms of domain architecture, PINc spans isoleucine 2–proline 136. Mg(2+) is bound by residues aspartate 5 and aspartate 104.

It belongs to the PINc/VapC protein family. It depends on Mg(2+) as a cofactor.

In terms of biological role, toxic component of a type II toxin-antitoxin (TA) system. An RNase. Involved in plasmid stability. This Pseudomonas syringae pv. tomato (strain ATCC BAA-871 / DC3000) protein is Plasmid stability protein StbB (stbB).